A 765-amino-acid chain; its full sequence is E3 ubiquitin-protein ligase SMURF2 (765 aa).

Residues 1–117 (MSNQGVRRNG…KDTGYQRLDL (117 aa)) enclose the C2 domain. WW domains follow at residues 157 to 190 (NDLP…RPTR), 251 to 284 (PDLP…DPRV), and 297 to 330 (GPLP…DPRL). The disordered stretch occupies residues 341–375 (SPNGSRAAVEAQSSSRPGQLKEQAQSVVSPGNLPE). Positions 351 to 369 (AQSSSRPGQLKEQAQSVVS) are enriched in polar residues. One can recognise an HECT domain in the interval 431 to 765 (RPKDLWKRLM…IEETCGFAVE (335 aa)). Cysteine 733 functions as the Glycyl thioester intermediate in the catalytic mechanism.

It localises to the nucleus. Its subcellular location is the cytoplasm. The protein localises to the cell membrane. It is found in the membrane raft. The enzyme catalyses S-ubiquitinyl-[E2 ubiquitin-conjugating enzyme]-L-cysteine + [acceptor protein]-L-lysine = [E2 ubiquitin-conjugating enzyme]-L-cysteine + N(6)-ubiquitinyl-[acceptor protein]-L-lysine.. It functions in the pathway protein modification; protein ubiquitination. In terms of biological role, E3 ubiquitin-protein ligase which accepts ubiquitin from an E2 ubiquitin-conjugating enzyme in the form of a thioester and then directly transfers the ubiquitin to targeted substrates. This chain is E3 ubiquitin-protein ligase SMURF2 (smurf2), found in Danio rerio (Zebrafish).